Reading from the N-terminus, the 346-residue chain is Haptoglobin (346 aa).

The N-terminal stretch at 1 to 18 is a signal peptide; it reads MRALGAVVTLLLWGQLFA. Residues 31 to 87 enclose the Sushi domain; sequence DSCPKPPEIENGYVEHLVRYRCQHYRLRTEGDGVYTLNSEKQWVNTAAGERLPECEA. Intrachain disulfides connect Cys-52–Cys-85, Cys-89–Cys-206, Cys-249–Cys-280, and Cys-291–Cys-321. The 243-residue stretch at 102–344 folds into the Peptidase S1 domain; sequence IIGGSLDAKG…FLDWIQETMA (243 aa). N-linked (GlcNAc...) asparagine glycosylation is found at Asn-147 and Asn-181. Positions 258-263 are interaction with CD163; the sequence is VPEKEG.

The protein belongs to the peptidase S1 family. As to quaternary structure, tetramer of two alpha and two beta chains; disulfide-linked. The hemoglobin/haptoglobin complex is composed of a haptoglobin dimer bound to two hemoglobin alpha-beta dimers. Interacts with CD163. Interacts with ERGIC3. As to expression, expressed by the liver and secreted in plasma.

It is found in the secreted. Its function is as follows. As a result of hemolysis, hemoglobin is found to accumulate in the kidney and is secreted in the urine. Haptoglobin captures, and combines with free plasma hemoglobin to allow hepatic recycling of heme iron and to prevent kidney damage. Haptoglobin also acts as an antioxidant, has antibacterial activity and plays a role in modulating many aspects of the acute phase response. Hemoglobin/haptoglobin complexes are rapidly cleared by the macrophage CD163 scavenger receptor expressed on the surface of liver Kupfer cells through an endocytic lysosomal degradation pathway. In Mesocricetus auratus (Golden hamster), this protein is Haptoglobin (HP).